Consider the following 360-residue polypeptide: NAD(P)H-quinone oxidoreductase subunit 1, chloroplastic (360 aa).

A run of 9 helical transmembrane segments spans residues Ile-27–Ile-47, Phe-98–Phe-118, Ile-129–Gly-149, Ala-165–Leu-185, Phe-203–Leu-223, Tyr-248–Ser-268, Leu-269–Leu-289, Ile-297–Ile-317, and Phe-340–Leu-360.

Belongs to the complex I subunit 1 family. NDH is composed of at least 16 different subunits, 5 of which are encoded in the nucleus.

The protein localises to the plastid. The protein resides in the chloroplast thylakoid membrane. It catalyses the reaction a plastoquinone + NADH + (n+1) H(+)(in) = a plastoquinol + NAD(+) + n H(+)(out). The enzyme catalyses a plastoquinone + NADPH + (n+1) H(+)(in) = a plastoquinol + NADP(+) + n H(+)(out). In terms of biological role, NDH shuttles electrons from NAD(P)H:plastoquinone, via FMN and iron-sulfur (Fe-S) centers, to quinones in the photosynthetic chain and possibly in a chloroplast respiratory chain. The immediate electron acceptor for the enzyme in this species is believed to be plastoquinone. Couples the redox reaction to proton translocation, and thus conserves the redox energy in a proton gradient. This Lepidium virginicum (Virginia pepperweed) protein is NAD(P)H-quinone oxidoreductase subunit 1, chloroplastic.